Consider the following 418-residue polypeptide: Queuine tRNA-ribosyltransferase accessory subunit 2 (418 aa).

4 residues coordinate Zn(2+): C325, C327, C330, and H356.

This sequence belongs to the queuine tRNA-ribosyltransferase family. QTRT2 subfamily. In terms of assembly, heterodimer of a catalytic subunit and an accessory subunit. Zn(2+) is required as a cofactor.

The protein localises to the cytoplasm. In terms of biological role, non-catalytic subunit of the queuine tRNA-ribosyltransferase (TGT) that catalyzes the base-exchange of a guanine (G) residue with queuine (Q) at position 34 (anticodon wobble position) in tRNAs with GU(N) anticodons (tRNA-Asp, -Asn, -His and -Tyr), resulting in the hypermodified nucleoside queuosine (7-(((4,5-cis-dihydroxy-2-cyclopenten-1-yl)amino)methyl)-7-deazaguanosine). The sequence is that of Queuine tRNA-ribosyltransferase accessory subunit 2 from Drosophila melanogaster (Fruit fly).